The chain runs to 362 residues: Lactosylceramide alpha-2,3-sialyltransferase (362 aa).

Residues 1–5 (MRRPS) are Cytoplasmic-facing. A helical; Signal-anchor for type II membrane protein transmembrane segment spans residues 6 to 26 (LLLKDILKCTLLVFGVWILYI). Residues 27–362 (LKLNYTTEEC…DLSGGIDREF (336 aa)) lie on the Lumenal side of the membrane. 4 N-linked (GlcNAc...) asparagine glycosylation sites follow: asparagine 30, asparagine 180, asparagine 224, and asparagine 334. A disulfide bond links cysteine 139 and cysteine 297.

This sequence belongs to the glycosyltransferase 29 family.

It localises to the golgi apparatus membrane. The enzyme catalyses a beta-D-Gal-(1-&gt;4)-beta-D-Glc-(1&lt;-&gt;1)-Cer(d18:1(4E)) + CMP-N-acetyl-beta-neuraminate = a ganglioside GM3 (d18:1(4E)) + CMP + H(+). It catalyses the reaction ganglioside GA2 (d18:1(4E)/18:0) + CMP-N-acetyl-beta-neuraminate = ganglioside GM2 (d18:1(4E)/18:0) + CMP + H(+). The catalysed reaction is a beta-D-Gal-(1&lt;-&gt;1')-ceramide + CMP-N-acetyl-beta-neuraminate = N-acetyl-alpha-neuraminosyl-(2-&gt;3)-beta-D-galactosyl-(1&lt;-&gt;1')-ceramide + CMP + H(+). It carries out the reaction ganglioside GA1 (d18:1(4E)/18:0) + CMP-N-acetyl-beta-neuraminate = ganglioside GM1 (d18:1(4E)/18:0) + CMP + H(+). Its function is as follows. Transfers the sialyl group (N-acetyl-alpha-neuraminyl or NeuAc) from CMP-NeuAc to the non-reducing terminal galactose (Gal) of glycosphingolipids forming gangliosides (important molecules involved in the regulation of multiple cellular processes, including cell proliferation and differentiation, apoptosis, embryogenesis, development, and oncogenesis). Mainly involved in the biosynthesis of ganglioside GM3 but can also use different glycolipids as substrate acceptors such as D-galactosylceramide (GalCer), asialo-GM2 (GA2) and asialo-GM1 (GA1), although less preferentially than beta-D-Gal-(1-&gt;4)-beta-D-Glc-(1&lt;-&gt;1)-Cer (LacCer). The sequence is that of Lactosylceramide alpha-2,3-sialyltransferase (ST3GAL5) from Pan troglodytes (Chimpanzee).